The primary structure comprises 427 residues: Glutamate-1-semialdehyde 2,1-aminomutase (427 aa).

Residue K265 is modified to N6-(pyridoxal phosphate)lysine.

The protein belongs to the class-III pyridoxal-phosphate-dependent aminotransferase family. HemL subfamily. Homodimer. Pyridoxal 5'-phosphate serves as cofactor.

Its subcellular location is the cytoplasm. The catalysed reaction is (S)-4-amino-5-oxopentanoate = 5-aminolevulinate. Its pathway is porphyrin-containing compound metabolism; protoporphyrin-IX biosynthesis; 5-aminolevulinate from L-glutamyl-tRNA(Glu): step 2/2. This is Glutamate-1-semialdehyde 2,1-aminomutase from Bordetella bronchiseptica (strain ATCC BAA-588 / NCTC 13252 / RB50) (Alcaligenes bronchisepticus).